The primary structure comprises 112 residues: UPF0145 protein Acid_4599 (112 aa).

It belongs to the UPF0145 family.

In Solibacter usitatus (strain Ellin6076), this protein is UPF0145 protein Acid_4599.